Consider the following 350-residue polypeptide: Methylthioribose-1-phosphate isomerase (350 aa).

Residues R47 to A49, R89, and Q196 contribute to the substrate site. The active-site Proton donor is the D237. N247 to K248 lines the substrate pocket.

Belongs to the eIF-2B alpha/beta/delta subunits family. MtnA subfamily.

It carries out the reaction 5-(methylsulfanyl)-alpha-D-ribose 1-phosphate = 5-(methylsulfanyl)-D-ribulose 1-phosphate. It participates in amino-acid biosynthesis; L-methionine biosynthesis via salvage pathway; L-methionine from S-methyl-5-thio-alpha-D-ribose 1-phosphate: step 1/6. Functionally, catalyzes the interconversion of methylthioribose-1-phosphate (MTR-1-P) into methylthioribulose-1-phosphate (MTRu-1-P). The chain is Methylthioribose-1-phosphate isomerase from Nitratidesulfovibrio vulgaris (strain DSM 19637 / Miyazaki F) (Desulfovibrio vulgaris).